We begin with the raw amino-acid sequence, 505 residues long: 2,3-bisphosphoglycerate-independent phosphoglycerate mutase (505 aa).

Residues Asp-13 and Ser-63 each coordinate Mn(2+). Ser-63 serves as the catalytic Phosphoserine intermediate. Substrate-binding positions include His-124, 153–154 (RD), Arg-183, Arg-189, 254–257 (RADR), and Lys-329. Residues Asp-395, His-399, Asp-436, His-437, and His-455 each coordinate Mn(2+).

It belongs to the BPG-independent phosphoglycerate mutase family. In terms of assembly, monomer. Mn(2+) serves as cofactor.

It carries out the reaction (2R)-2-phosphoglycerate = (2R)-3-phosphoglycerate. It functions in the pathway carbohydrate degradation; glycolysis; pyruvate from D-glyceraldehyde 3-phosphate: step 3/5. In terms of biological role, catalyzes the interconversion of 2-phosphoglycerate and 3-phosphoglycerate. The protein is 2,3-bisphosphoglycerate-independent phosphoglycerate mutase of Agrobacterium fabrum (strain C58 / ATCC 33970) (Agrobacterium tumefaciens (strain C58)).